The chain runs to 98 residues: MATKSVSTFAIFFILVLAIFETPEIEAYDRKCLKEYGGDVGFSYCAPRIFPTFCDQNCRKNKGAKGGVCRWEENNAIGVKCLCNFCSEEPSDQTLSRI.

The first 27 residues, M1–A27, serve as a signal peptide directing secretion. 4 disulfides stabilise this stretch: C32–C86, C45–C69, C54–C81, and C58–C83.

The protein belongs to the DEFL family. Protease inhibitor I18 (RTI/MTI-2) subfamily.

It localises to the secreted. The sequence is that of Defensin-like protein 192 (ATTI7) from Arabidopsis thaliana (Mouse-ear cress).